The primary structure comprises 152 residues: Transcriptional repressor NrdR (152 aa).

Residues 1–21 (MRCPFCGNGDTQVKDSRPTED) are disordered. The segment at 3–34 (CPFCGNGDTQVKDSRPTEDSAAIRRRRFCPAC) is a zinc-finger region. The span at 12–21 (QVKDSRPTED) shows a compositional bias: basic and acidic residues. An ATP-cone domain is found at 49-139 (LVIVKKDGQR…VYRNFREAKD (91 aa)).

The protein belongs to the NrdR family. It depends on Zn(2+) as a cofactor.

Negatively regulates transcription of bacterial ribonucleotide reductase nrd genes and operons by binding to NrdR-boxes. The protein is Transcriptional repressor NrdR of Rhodospirillum rubrum (strain ATCC 11170 / ATH 1.1.1 / DSM 467 / LMG 4362 / NCIMB 8255 / S1).